The following is a 133-amino-acid chain: Large ribosomal subunit protein bL19 (133 aa).

The tract at residues 114 to 133 (IAERQMTAASKEEPAEKSEA) is disordered. A compositionally biased stretch (basic and acidic residues) spans 123–133 (SKEEPAEKSEA).

Belongs to the bacterial ribosomal protein bL19 family.

Functionally, this protein is located at the 30S-50S ribosomal subunit interface and may play a role in the structure and function of the aminoacyl-tRNA binding site. This chain is Large ribosomal subunit protein bL19, found in Phenylobacterium zucineum (strain HLK1).